A 438-amino-acid polypeptide reads, in one-letter code: Argininosuccinate lyase (438 aa).

The protein belongs to the lyase 1 family. Argininosuccinate lyase subfamily.

It localises to the cytoplasm. It catalyses the reaction 2-(N(omega)-L-arginino)succinate = fumarate + L-arginine. Its pathway is amino-acid biosynthesis; L-arginine biosynthesis; L-arginine from L-ornithine and carbamoyl phosphate: step 3/3. The protein is Argininosuccinate lyase of Clostridioides difficile (strain 630) (Peptoclostridium difficile).